The following is a 477-amino-acid chain: Bifunctional enzyme PyrF/PyrE (477 aa).

Positions M1–S273 are OMP decarboxylase. K96 (proton donor) is an active-site residue. The interval V274–E477 is orotate phosphoribosyltransferase. 5-phospho-alpha-D-ribose 1-diphosphate contacts are provided by residues R374, K375, K378, H380, and D400 to S408.

The protein in the N-terminal section; belongs to the OMP decarboxylase family. Type 2 subfamily. It in the C-terminal section; belongs to the purine/pyrimidine phosphoribosyltransferase family. Mg(2+) is required as a cofactor.

The catalysed reaction is orotidine 5'-phosphate + H(+) = UMP + CO2. It carries out the reaction orotidine 5'-phosphate + diphosphate = orotate + 5-phospho-alpha-D-ribose 1-diphosphate. It functions in the pathway pyrimidine metabolism; UMP biosynthesis via de novo pathway; UMP from orotate: step 1/2. The protein operates within pyrimidine metabolism; UMP biosynthesis via de novo pathway; UMP from orotate: step 2/2. Catalyzes the transfer of a ribosyl phosphate group from 5-phosphoribose 1-diphosphate to orotate, leading to the formation of orotidine monophosphate (OMP). Its function is as follows. Catalyzes the decarboxylation of orotidine monophosphate (OMP) to uridine monophosphate (UMP). The protein is Bifunctional enzyme PyrF/PyrE (pyrFE) of Nostoc sp. (strain PCC 7120 / SAG 25.82 / UTEX 2576).